The primary structure comprises 839 residues: MSDNEIKNETPKKLSLQRRTKTTIADGKVQVEVRKSRKIDTAVAKAEQAKLKAKQEAEAKAQEKQAAEKAAQAQTEAKAQTEQACTTKKTIQPPIIPGKQKAMPKTEAKKATPKTEKIVDAEKEAKRKEEAELRRKQEELASPKAEMEAKRAAENARRLAEIAREETVENGEEFEDNRFTSTYAREADRDHDRRSEGNRTRAKGGVAKAKKGGREDDKNERNSDRRNAKDIKGKKSKGKKGASLQQAFTKPVQAVKTDVVIGETITVAELANKMAIKATEIIKTMMKMGEMVTINQVIDQETAQLVAEELGHKVILRKENELEESVMEDRDIDAEKVTRAPVVTIMGHVDHGKTLLLDYIRKAKVAAGEAGGITQHIGAYHVETEDGKMITFLDTPGHAAFTSMRARGAKATDIVVLVVAADDGVMPQTIEAIQHAKAAGAPLVVAVNKIDKPEADPSRVEQELLQYEVVSEKFGGDVQFVAVSAKKGMGIDELLEAIILQSEVLELTAVKKGMASGVVIESYLDKGRGPVATILVQSGTLNKGDIVLCGFEYGRVRAMRDENGKDINSAGPSIPVEVLGLSGVPSAGDEATVVRDEKKAREVALYRQGKYREVKLARQQKAKLENMFSNMTEGDIAELNVIVKADVQGSVEAICQALGELSTEEVKVKVVGSGVGGITETDATLAAASNAIMVGFNVRADASARRVIENENIDLRYYSIIYELLNEIKAAMTGMLQPEFKQEIIGLAEVRNIFRHPKFGAIAGCMVTEGIIKRNNPIRVLRDNVVIFEGELDSLRRFKDDVAEVRNGMECGIGVKNYNDVKVGDQIEVFEVVEIKRSI.

Composition is skewed to basic and acidic residues over residues 1–12 and 57–67; these read MSDNEIKNETPK and AEAKAQEKQAA. Disordered stretches follow at residues 1–21 and 57–244; these read MSDN…RRTK and AEAK…GASL. The span at 68–90 shows a compositional bias: low complexity; it reads EKAAQAQTEAKAQTEQACTTKKT. Basic and acidic residues-rich tracts occupy residues 104–167, 185–199, and 212–233; these read PKTE…REET, READ…EGNR, and GGRE…DIKG. One can recognise a tr-type G domain in the interval 338–508; it reads TRAPVVTIMG…ILQSEVLELT (171 aa). The interval 347–354 is G1; sequence GHVDHGKT. Residue 347–354 coordinates GTP; it reads GHVDHGKT. The interval 372 to 376 is G2; sequence GITQH. The segment at 394 to 397 is G3; the sequence is DTPG. GTP is bound by residues 394–398 and 448–451; these read DTPGH and NKID. The tract at residues 448 to 451 is G4; that stretch reads NKID. Positions 484–486 are G5; sequence SAK.

It belongs to the TRAFAC class translation factor GTPase superfamily. Classic translation factor GTPase family. IF-2 subfamily.

It localises to the cytoplasm. Its function is as follows. One of the essential components for the initiation of protein synthesis. Protects formylmethionyl-tRNA from spontaneous hydrolysis and promotes its binding to the 30S ribosomal subunits. Also involved in the hydrolysis of GTP during the formation of the 70S ribosomal complex. The chain is Translation initiation factor IF-2 from Haemophilus ducreyi (strain 35000HP / ATCC 700724).